Consider the following 332-residue polypeptide: Ribosomal RNA small subunit methyltransferase H (332 aa).

Residues glycine 36–tyrosine 38, aspartate 54, phenylalanine 81, aspartate 102, and glutamine 109 each bind S-adenosyl-L-methionine.

Belongs to the methyltransferase superfamily. RsmH family.

Its subcellular location is the cytoplasm. The enzyme catalyses cytidine(1402) in 16S rRNA + S-adenosyl-L-methionine = N(4)-methylcytidine(1402) in 16S rRNA + S-adenosyl-L-homocysteine + H(+). Its function is as follows. Specifically methylates the N4 position of cytidine in position 1402 (C1402) of 16S rRNA. The polypeptide is Ribosomal RNA small subunit methyltransferase H (Nitrobacter winogradskyi (strain ATCC 25391 / DSM 10237 / CIP 104748 / NCIMB 11846 / Nb-255)).